We begin with the raw amino-acid sequence, 142 residues long: Peptide methionine sulfoxide reductase MsrB (142 aa).

Positions leucine 2–tyrosine 125 constitute a MsrB domain. The active-site Nucleophile is the cysteine 114.

It belongs to the MsrB Met sulfoxide reductase family.

It carries out the reaction L-methionyl-[protein] + [thioredoxin]-disulfide + H2O = L-methionyl-(R)-S-oxide-[protein] + [thioredoxin]-dithiol. The protein is Peptide methionine sulfoxide reductase MsrB of Staphylococcus aureus (strain Mu3 / ATCC 700698).